A 216-amino-acid polypeptide reads, in one-letter code: Large ribosomal subunit protein uL3 (216 aa).

The segment at 135-156 (LGASHGTQRKHRSPGSIGGCAT) is disordered.

The protein belongs to the universal ribosomal protein uL3 family. As to quaternary structure, part of the 50S ribosomal subunit. Forms a cluster with proteins L14 and L19.

Its function is as follows. One of the primary rRNA binding proteins, it binds directly near the 3'-end of the 23S rRNA, where it nucleates assembly of the 50S subunit. The polypeptide is Large ribosomal subunit protein uL3 (Thermobifida fusca (strain YX)).